The sequence spans 308 residues: MTTPAFPDLVPALAAALPELRGKLTANAPIADVTWFRVGGPAQVLFQPADEADLAYALAHLPAEIPVTVIGLGSNLIVRDGGVPGMVIRLGRGFTDIAVDGTTIVAGAGVPDVKVARAAADAGLAGLAFLRGIPGAIGGALRMNGGAYGGETKDALMSARAVDRAGRIHILSLDDMGFTYRHSAAPEDFIFTQATFRGTPGEVAEIQAEMERITSSREATQPIKSRTGGSTFKNPPGHKAWQLVDAAGCRGLVLGRAQVSEMHTNFLINLGCATAAEIEGLGEEVRRRVLETSGVTLEWEIKRIGLPA.

The region spanning 37–201 (RVGGPAQVLF…TQATFRGTPG (165 aa)) is the FAD-binding PCMH-type domain. The active site involves arginine 181. The span at 216–233 (SREATQPIKSRTGGSTFK) shows a compositional bias: polar residues. A disordered region spans residues 216–236 (SREATQPIKSRTGGSTFKNPP). Catalysis depends on serine 230, which acts as the Proton donor. Residue glutamate 300 is part of the active site.

It belongs to the MurB family. The cofactor is FAD.

It is found in the cytoplasm. The catalysed reaction is UDP-N-acetyl-alpha-D-muramate + NADP(+) = UDP-N-acetyl-3-O-(1-carboxyvinyl)-alpha-D-glucosamine + NADPH + H(+). It functions in the pathway cell wall biogenesis; peptidoglycan biosynthesis. Functionally, cell wall formation. This is UDP-N-acetylenolpyruvoylglucosamine reductase from Azorhizobium caulinodans (strain ATCC 43989 / DSM 5975 / JCM 20966 / LMG 6465 / NBRC 14845 / NCIMB 13405 / ORS 571).